The primary structure comprises 343 residues: Phenylalanine--tRNA ligase alpha subunit (343 aa).

Glu-256 lines the Mg(2+) pocket.

Belongs to the class-II aminoacyl-tRNA synthetase family. Phe-tRNA synthetase alpha subunit type 1 subfamily. In terms of assembly, tetramer of two alpha and two beta subunits. Requires Mg(2+) as cofactor.

It localises to the cytoplasm. It catalyses the reaction tRNA(Phe) + L-phenylalanine + ATP = L-phenylalanyl-tRNA(Phe) + AMP + diphosphate + H(+). The chain is Phenylalanine--tRNA ligase alpha subunit from Aster yellows witches'-broom phytoplasma (strain AYWB).